The primary structure comprises 308 residues: N-acetylmuramic acid 6-phosphate etherase (308 aa).

Residues 59 to 222 (TAERLRHGGR…STGVMVKLGK (164 aa)) enclose the SIS domain. Glu-87 serves as the catalytic Proton donor. The active site involves Glu-118.

This sequence belongs to the GCKR-like family. MurNAc-6-P etherase subfamily. Homodimer.

It catalyses the reaction N-acetyl-D-muramate 6-phosphate + H2O = N-acetyl-D-glucosamine 6-phosphate + (R)-lactate. It participates in amino-sugar metabolism; N-acetylmuramate degradation. In terms of biological role, specifically catalyzes the cleavage of the D-lactyl ether substituent of MurNAc 6-phosphate, producing GlcNAc 6-phosphate and D-lactate. In Nostoc punctiforme (strain ATCC 29133 / PCC 73102), this protein is N-acetylmuramic acid 6-phosphate etherase.